We begin with the raw amino-acid sequence, 256 residues long: Hemin import ATP-binding protein HmuV (256 aa).

The region spanning 2–238 is the ABC transporter domain; it reads ISAQNLVYSL…QELTMLYGAD (237 aa). 34-41 contacts ATP; that stretch reads GPNGAGKS.

It belongs to the ABC transporter superfamily. Heme (hemin) importer (TC 3.A.1.14.5) family. The complex is composed of two ATP-binding proteins (HmuV), two transmembrane proteins (HmuU) and a solute-binding protein (HmuT).

It is found in the cell inner membrane. In terms of biological role, part of the ABC transporter complex HmuTUV involved in hemin import. Responsible for energy coupling to the transport system. The protein is Hemin import ATP-binding protein HmuV of Shigella dysenteriae.